Consider the following 543-residue polypeptide: MKFLTTGLLATAALAAAQEQQVLQAEDGMGQAPQRGSSIFDETLQKFQSSLEDGISHFWSEMKTNFKDYLPLISLPKKHTRRPDSEWDHVVRGADIESVWVQGADGEKRREIDGKLHNYDLRVKAVDPSKLGVDAGVKQYSGYLDDNDADKHLFYWFFESRNDPKNDPVVLWLNGGPGCSSLTGLFLELGPATIDKNLKVVSNPYSWNSNASVIFLDQPVNVGFSYSGSSVSDTVAAGKDVYALLTLFFKQFPEYATQDFHISGESYAGHYIPVFAAEILSHKNTNINLKSALIGNGLTDPLTQYPQYRPMACGEGGYPAVLDQGTCRSMDNSLERCLSLIETCYSSESAWVCVPAAMYCNSAILAPYQQTGMNPYDVRNKCEDMASLCYPQLNVITEWLNQKSVMQALGVEVESYESCNSGINRDFLFHGDWMKPYHRLVPSVLEKIPVLIYAGDADFICNWLGNQAWTDALEWPGHKKFAEAKLEDLKIVDNKNKGKKIGQVKSSGNFTFMRIFGAGHMVPLNQPEASLEFLNRWLRGEWH.

A signal peptide spans 1 to 17 (MKFLTTGLLATAALAAA). Residues 18–124 (QEQQVLQAED…KLHNYDLRVK (107 aa)) constitute a propeptide that is removed on maturation. 5 disulfides stabilise this stretch: cysteine 179/cysteine 419, cysteine 313/cysteine 327, cysteine 337/cysteine 360, cysteine 344/cysteine 353, and cysteine 382/cysteine 389. N-linked (GlcNAc...) asparagine glycosylation is present at asparagine 210. Serine 266 is a catalytic residue. The active site involves aspartate 458. Residue asparagine 509 is glycosylated (N-linked (GlcNAc...) asparagine). The active site involves histidine 520.

This sequence belongs to the peptidase S10 family.

Its subcellular location is the vacuole. The enzyme catalyses Release of a C-terminal amino acid with broad specificity.. In terms of biological role, vacuolar carboxypeptidase involved in degradation of small peptides. Digests preferentially peptides containing an aliphatic or hydrophobic residue in P1' position, as well as methionine, leucine or phenylalanine in P1 position of ester substrate. This chain is Carboxypeptidase Y homolog A (CPYA), found in Trichophyton equinum (Horse ringworm fungus).